A 276-amino-acid polypeptide reads, in one-letter code: Putative translation initiation factor eIF-2B subunit 2-like (276 aa).

Belongs to the eIF-2B alpha/beta/delta subunits family. As to quaternary structure, complex of two different subunits.

Its function is as follows. Catalyzes the exchange of initiation factor 2-bound GDP for GTP. In Pyrococcus furiosus (strain ATCC 43587 / DSM 3638 / JCM 8422 / Vc1), this protein is Putative translation initiation factor eIF-2B subunit 2-like.